The following is a 448-amino-acid chain: MAEKKKKRVLILGAAGRDFHNFNVFFRDNPEYEVVAFTATQIPDIEGRIYPPELAGELYPNGIPIWSEDDMEKIIKEHDIDVVVFAYSDVSHEHVMHLASRAHSAGADFWLLGPKSTMLKSSKPVVAVTAVRTGCGKSQTSRKVAQLLQEMGYKVVAIRHPMPYGDLRKQVVQRFATFEDLDKYECTIEEREEYEPYIERGMVVYAGVDYEKILREAEKEADIILWDGGNNDFPFYEPDLWIVVTDPHRPGHELKYHPGETNFRAADVIIINKIDTANRDDIQKVRESIEKVNPNATVIEAASPIFVDKPELIKGKRVLVVEDGPTLTHGGMKYGAGYVAAKKFGAAEIIDPRPYAVGSIIETYKKYPHLDVILPAMGYGKKQIKELEETINRADADVVIMGTPVDLRRFMNLNKPAVRVKYELEEIGQPKLKEVLEEWAKNCEKLKK.

As to quaternary structure, probably forms homotetramers and higher assemblies of tetramers. Requires Mg(2+) as cofactor.

The catalysed reaction is L-arginine + ADP + phosphate + H(+) = L-citrulline + NH4(+) + ATP. Its pathway is amino-acid biosynthesis; L-proline biosynthesis. The protein operates within amino-acid degradation; L-arginine degradation. It functions in the pathway amino-acid biosynthesis; L-arginine biosynthesis. Arginine deiminase involved in an arginine synthetase pathway, which provides citrulline and ornithine, the precursors for proline biosynthesis. Catalyzes the conversion of L-arginine to citrulline while conserving the energy of arginine deimination to generate ATP from ADP and free phosphate. Is specific toward L-arginine and cannot use D-arginine, agmatine, guanidine, L-alanine-L-arginine dipeptide and L-arginine-L-alanine dipeptide. Can also use CDP, GDP or UDP, with lower activity (38%, 8.4% and 13.3%, respectively). The enzyme can also catalyze the reverse reaction: the ATP-dependent generation of arginine from citrulline in a single reaction by using free ammonia, without the requirement of aspartic acid. In vivo, most likely functions in the arginine catabolism to produce citrulline for proline biosynthesis while also generating ATP, but it can also contribute to arginine biosynthesis when the necessary precursors such as citrulline are abundant. This chain is Arginine synthetase ArcE, found in Thermococcus kodakarensis (strain ATCC BAA-918 / JCM 12380 / KOD1) (Pyrococcus kodakaraensis (strain KOD1)).